We begin with the raw amino-acid sequence, 593 residues long: Transcription factor ATEG_07667 (593 aa).

A DNA-binding region (zn(2)-C6 fungal-type) is located at residues cysteine 18–cysteine 47.

The protein resides in the nucleus. Functionally, transcriptional regulator that regulates both the azasperpyranone A biosynthesis clusters A and B. Specifically up-regulates the expression of the cluster A and B specific transcription factors ATEG_03638 and ATEG_07666, which in turn activate the expression of their respective clusters. This chain is Transcription factor ATEG_07667, found in Aspergillus terreus (strain NIH 2624 / FGSC A1156).